Here is a 279-residue protein sequence, read N- to C-terminus: Release factor glutamine methyltransferase (279 aa).

S-adenosyl-L-methionine-binding positions include 118–122 (GTGSG), Asp141, and Asn182. Residue 182-185 (NPPY) coordinates substrate.

This sequence belongs to the protein N5-glutamine methyltransferase family. PrmC subfamily.

It catalyses the reaction L-glutaminyl-[peptide chain release factor] + S-adenosyl-L-methionine = N(5)-methyl-L-glutaminyl-[peptide chain release factor] + S-adenosyl-L-homocysteine + H(+). Methylates the class 1 translation termination release factors RF1/PrfA and RF2/PrfB on the glutamine residue of the universally conserved GGQ motif. The polypeptide is Release factor glutamine methyltransferase (Streptococcus pneumoniae (strain ATCC BAA-255 / R6)).